Reading from the N-terminus, the 149-residue chain is Protein FAM72B (149 aa).

This sequence belongs to the FAM72 family.

The polypeptide is Protein FAM72B (FAM72B) (Homo sapiens (Human)).